We begin with the raw amino-acid sequence, 736 residues long: 1,4-alpha-glucan branching enzyme GlgB (736 aa).

Asp-419 serves as the catalytic Nucleophile. Glu-472 functions as the Proton donor in the catalytic mechanism.

It belongs to the glycosyl hydrolase 13 family. GlgB subfamily. Monomer.

It carries out the reaction Transfers a segment of a (1-&gt;4)-alpha-D-glucan chain to a primary hydroxy group in a similar glucan chain.. The protein operates within glycan biosynthesis; glycogen biosynthesis. Catalyzes the formation of the alpha-1,6-glucosidic linkages in glycogen by scission of a 1,4-alpha-linked oligosaccharide from growing alpha-1,4-glucan chains and the subsequent attachment of the oligosaccharide to the alpha-1,6 position. The polypeptide is 1,4-alpha-glucan branching enzyme GlgB (Rhizobium meliloti (strain 1021) (Ensifer meliloti)).